The chain runs to 409 residues: Elongation factor Tu, chloroplastic (409 aa).

The region spanning 10 to 214 (KPHINIGTIG…AVDAYIPTPE (205 aa)) is the tr-type G domain. The segment at 19-26 (GHVDHGKT) is G1. Residue 19-26 (GHVDHGKT) participates in GTP binding. Residue threonine 26 coordinates Mg(2+). The segment at 60 to 64 (GITIN) is G2. Residues 81-84 (DCPG) are G3. Residues 81–85 (DCPGH) and 136–139 (NKQD) contribute to the GTP site. Residues 136–139 (NKQD) form a G4 region. The tract at residues 174–176 (SRL) is G5.

The protein belongs to the TRAFAC class translation factor GTPase superfamily. Classic translation factor GTPase family. EF-Tu/EF-1A subfamily.

The protein localises to the plastid. Its subcellular location is the chloroplast. It carries out the reaction GTP + H2O = GDP + phosphate + H(+). Functionally, GTP hydrolase that promotes the GTP-dependent binding of aminoacyl-tRNA to the A-site of ribosomes during protein biosynthesis. This Stephanocyclus meneghinianus (Diatom) protein is Elongation factor Tu, chloroplastic (tufA).